Here is a 78-residue protein sequence, read N- to C-terminus: Translational regulator CsrA (78 aa).

This sequence belongs to the CsrA/RsmA family. As to quaternary structure, homodimer; the beta-strands of each monomer intercalate to form a hydrophobic core, while the alpha-helices form wings that extend away from the core.

It localises to the cytoplasm. Its function is as follows. A translational regulator that binds mRNA to regulate translation initiation and/or mRNA stability. Usually binds in the 5'-UTR at or near the Shine-Dalgarno sequence preventing ribosome-binding, thus repressing translation. Its main target seems to be the major flagellin gene, while its function is anatagonized by FliW. The protein is Translational regulator CsrA of Desulfovibrio desulfuricans (strain ATCC 27774 / DSM 6949 / MB).